A 310-amino-acid chain; its full sequence is Methionyl-tRNA formyltransferase (310 aa).

A (6S)-5,6,7,8-tetrahydrofolate-binding site is contributed by 111-114; it reads SLLP.

It belongs to the Fmt family.

It carries out the reaction L-methionyl-tRNA(fMet) + (6R)-10-formyltetrahydrofolate = N-formyl-L-methionyl-tRNA(fMet) + (6S)-5,6,7,8-tetrahydrofolate + H(+). Its function is as follows. Attaches a formyl group to the free amino group of methionyl-tRNA(fMet). The formyl group appears to play a dual role in the initiator identity of N-formylmethionyl-tRNA by promoting its recognition by IF2 and preventing the misappropriation of this tRNA by the elongation apparatus. This is Methionyl-tRNA formyltransferase from Rhodopseudomonas palustris (strain BisB5).